The chain runs to 125 residues: MARIAGIDLPNNKQLQIALTSIYGIGRARALEICRKTDILPEKRAKDLDNDEVNKLRKIIESDYVVEGKLRSELAMSIKRLMDIACYRGLRHRKGLPLRGQRTKTNARTRKGKRKTVANKKMAAK.

A disordered region spans residues R99 to K125.

Belongs to the universal ribosomal protein uS13 family. Part of the 30S ribosomal subunit. Forms a loose heterodimer with protein S19. Forms two bridges to the 50S subunit in the 70S ribosome.

In terms of biological role, located at the top of the head of the 30S subunit, it contacts several helices of the 16S rRNA. In the 70S ribosome it contacts the 23S rRNA (bridge B1a) and protein L5 of the 50S subunit (bridge B1b), connecting the 2 subunits; these bridges are implicated in subunit movement. Contacts the tRNAs in the A and P-sites. The polypeptide is Small ribosomal subunit protein uS13 (Borrelia turicatae (strain 91E135)).